The sequence spans 978 residues: Glycine dehydrogenase (decarboxylating) (978 aa).

Lys726 bears the N6-(pyridoxal phosphate)lysine mark.

Belongs to the GcvP family. As to quaternary structure, the glycine cleavage system is composed of four proteins: P, T, L and H. The cofactor is pyridoxal 5'-phosphate.

The catalysed reaction is N(6)-[(R)-lipoyl]-L-lysyl-[glycine-cleavage complex H protein] + glycine + H(+) = N(6)-[(R)-S(8)-aminomethyldihydrolipoyl]-L-lysyl-[glycine-cleavage complex H protein] + CO2. In terms of biological role, the glycine cleavage system catalyzes the degradation of glycine. The P protein binds the alpha-amino group of glycine through its pyridoxal phosphate cofactor; CO(2) is released and the remaining methylamine moiety is then transferred to the lipoamide cofactor of the H protein. This Paraburkholderia phytofirmans (strain DSM 17436 / LMG 22146 / PsJN) (Burkholderia phytofirmans) protein is Glycine dehydrogenase (decarboxylating).